The sequence spans 130 residues: Small ribosomal subunit protein uS9 (130 aa).

Positions 98–130 (LKRAGMLTRDPRMKERKKPGLKGARRSPQFSKR) are disordered. Residues 111–130 (KERKKPGLKGARRSPQFSKR) show a composition bias toward basic residues.

Belongs to the universal ribosomal protein uS9 family.

This Macrococcus caseolyticus (strain JCSC5402) (Macrococcoides caseolyticum) protein is Small ribosomal subunit protein uS9.